The sequence spans 494 residues: Argininosuccinate synthase, chloroplastic (494 aa).

A chloroplast-targeting transit peptide spans 1-73 (MAEISATSFP…SRSCKNQAIR (73 aa)). An N-acetylalanine modification is found at Ala-74. Residues 102–110 (AYSGGLDTS) and Ala-129 contribute to the ATP site. Residues Tyr-181 and Ser-186 each contribute to the L-citrulline site. Gly-211 provides a ligand contact to ATP. L-aspartate contacts are provided by Thr-213, Asn-217, and Asp-218. Asn-217 contacts L-citrulline. Positions 221, 270, 279, 355, and 367 each coordinate L-citrulline.

It belongs to the argininosuccinate synthase family. Type 1 subfamily. As to quaternary structure, homotetramer.

Its subcellular location is the plastid. It localises to the chloroplast. It catalyses the reaction L-citrulline + L-aspartate + ATP = 2-(N(omega)-L-arginino)succinate + AMP + diphosphate + H(+). Its pathway is amino-acid biosynthesis; L-arginine biosynthesis; L-arginine from L-ornithine and carbamoyl phosphate: step 2/3. The chain is Argininosuccinate synthase, chloroplastic from Arabidopsis thaliana (Mouse-ear cress).